The following is a 201-amino-acid chain: Holliday junction branch migration complex subunit RuvA (201 aa).

Residues 1 to 64 (MIGRLHGKII…EDAHLLFGFA (64 aa)) form a domain I region. A domain II region spans residues 65 to 143 (QKQDRTLFRE…GVAQSDFFEE (79 aa)). Residues 144-154 (HSVETIVATHS) form a flexible linker region. Positions 154–201 (SHDPADEARDALVALGYKLADAEKMIKKVNKAGATSEQLIREALKASL) are domain III.

Belongs to the RuvA family. Homotetramer. Forms an RuvA(8)-RuvB(12)-Holliday junction (HJ) complex. HJ DNA is sandwiched between 2 RuvA tetramers; dsDNA enters through RuvA and exits via RuvB. An RuvB hexamer assembles on each DNA strand where it exits the tetramer. Each RuvB hexamer is contacted by two RuvA subunits (via domain III) on 2 adjacent RuvB subunits; this complex drives branch migration. In the full resolvosome a probable DNA-RuvA(4)-RuvB(12)-RuvC(2) complex forms which resolves the HJ.

Its subcellular location is the cytoplasm. The RuvA-RuvB-RuvC complex processes Holliday junction (HJ) DNA during genetic recombination and DNA repair, while the RuvA-RuvB complex plays an important role in the rescue of blocked DNA replication forks via replication fork reversal (RFR). RuvA specifically binds to HJ cruciform DNA, conferring on it an open structure. The RuvB hexamer acts as an ATP-dependent pump, pulling dsDNA into and through the RuvAB complex. HJ branch migration allows RuvC to scan DNA until it finds its consensus sequence, where it cleaves and resolves the cruciform DNA. The sequence is that of Holliday junction branch migration complex subunit RuvA from Actinobacillus pleuropneumoniae serotype 5b (strain L20).